The sequence spans 383 residues: S-adenosylmethionine synthase (383 aa).

ATP is bound at residue histidine 15. Residue aspartate 17 coordinates Mg(2+). K(+) is bound at residue glutamate 43. 2 residues coordinate L-methionine: glutamate 56 and glutamine 99. Positions 99–109 (QSPDINQGVDR) are flexible loop. ATP is bound by residues 164–166 (DAK), 230–231 (RF), aspartate 239, 245–246 (RK), alanine 262, and lysine 266. Aspartate 239 contributes to the L-methionine binding site. Lysine 270 contributes to the L-methionine binding site.

It belongs to the AdoMet synthase family. Homotetramer; dimer of dimers. The cofactor is Mg(2+). Requires K(+) as cofactor.

Its subcellular location is the cytoplasm. It carries out the reaction L-methionine + ATP + H2O = S-adenosyl-L-methionine + phosphate + diphosphate. It functions in the pathway amino-acid biosynthesis; S-adenosyl-L-methionine biosynthesis; S-adenosyl-L-methionine from L-methionine: step 1/1. Functionally, catalyzes the formation of S-adenosylmethionine (AdoMet) from methionine and ATP. The overall synthetic reaction is composed of two sequential steps, AdoMet formation and the subsequent tripolyphosphate hydrolysis which occurs prior to release of AdoMet from the enzyme. The polypeptide is S-adenosylmethionine synthase (Shewanella sp. (strain ANA-3)).